Here is a 246-residue protein sequence, read N- to C-terminus: Thiamine import ATP-binding protein ThiQ (246 aa).

An ABC transporter domain is found at 10–239 (VKLDALAFAY…QGPPAFARYL (230 aa)). 41-48 (GPSGSGKS) lines the ATP pocket.

Belongs to the ABC transporter superfamily. Thiamine importer (TC 3.A.1.19.1) family. As to quaternary structure, the complex is composed of two ATP-binding proteins (ThiQ), two transmembrane proteins (ThiP) and a solute-binding protein (ThiB).

Its subcellular location is the cell inner membrane. It carries out the reaction thiamine(out) + ATP + H2O = thiamine(in) + ADP + phosphate + H(+). In terms of biological role, part of the ABC transporter complex ThiBPQ involved in thiamine import. Responsible for energy coupling to the transport system. The sequence is that of Thiamine import ATP-binding protein ThiQ from Chelativorans sp. (strain BNC1).